A 257-amino-acid polypeptide reads, in one-letter code: Pimeloyl-[acyl-carrier protein] methyl ester esterase (257 aa).

One can recognise an AB hydrolase-1 domain in the interval Leu-16–Ser-240. Substrate is bound by residues Trp-22, Ser-82–Leu-83, and Phe-143–Gln-147. Catalysis depends on Ser-82, which acts as the Nucleophile. Active-site residues include Asp-207 and His-235. Position 235 (His-235) interacts with substrate.

This sequence belongs to the AB hydrolase superfamily. Carboxylesterase BioH family. Monomer.

The protein resides in the cytoplasm. It carries out the reaction 6-carboxyhexanoyl-[ACP] methyl ester + H2O = 6-carboxyhexanoyl-[ACP] + methanol + H(+). It participates in cofactor biosynthesis; biotin biosynthesis. Functionally, the physiological role of BioH is to remove the methyl group introduced by BioC when the pimeloyl moiety is complete. It allows to synthesize pimeloyl-ACP via the fatty acid synthetic pathway through the hydrolysis of the ester bonds of pimeloyl-ACP esters. The sequence is that of Pimeloyl-[acyl-carrier protein] methyl ester esterase from Aliivibrio fischeri (strain ATCC 700601 / ES114) (Vibrio fischeri).